A 400-amino-acid chain; its full sequence is Probable glucan endo-1,6-beta-glucosidase B (400 aa).

The first 17 residues, 1 to 17, serve as a signal peptide directing secretion; it reads MIRRLAALSALSGLATA. N30 is a glycosylation site (N-linked (GlcNAc...) asparagine). E219 acts as the Proton donor in catalysis. The N-linked (GlcNAc...) asparagine glycan is linked to N272. E320 (nucleophile) is an active-site residue.

The protein belongs to the glycosyl hydrolase 5 (cellulase A) family.

The protein localises to the secreted. The catalysed reaction is Random hydrolysis of (1-&gt;6)-linkages in (1-&gt;6)-beta-D-glucans.. Its function is as follows. Beta-glucanases participate in the metabolism of beta-glucan, the main structural component of the cell wall. Acts on lutean, pustulan and 1,6-oligo-beta-D-glucosides. In Neosartorya fischeri (strain ATCC 1020 / DSM 3700 / CBS 544.65 / FGSC A1164 / JCM 1740 / NRRL 181 / WB 181) (Aspergillus fischerianus), this protein is Probable glucan endo-1,6-beta-glucosidase B (exgB).